The chain runs to 303 residues: Sulfate adenylyltransferase subunit 2 (303 aa).

Residues S282–F303 form a disordered region.

The protein belongs to the PAPS reductase family. CysD subfamily. Heterodimer composed of CysD, the smaller subunit, and CysN.

It carries out the reaction sulfate + ATP + H(+) = adenosine 5'-phosphosulfate + diphosphate. The protein operates within sulfur metabolism; hydrogen sulfide biosynthesis; sulfite from sulfate: step 1/3. Its function is as follows. With CysN forms the ATP sulfurylase (ATPS) that catalyzes the adenylation of sulfate producing adenosine 5'-phosphosulfate (APS) and diphosphate, the first enzymatic step in sulfur assimilation pathway. APS synthesis involves the formation of a high-energy phosphoric-sulfuric acid anhydride bond driven by GTP hydrolysis by CysN coupled to ATP hydrolysis by CysD. The polypeptide is Sulfate adenylyltransferase subunit 2 (Maricaulis maris (strain MCS10) (Caulobacter maris)).